A 136-amino-acid polypeptide reads, in one-letter code: Blasticidin-S acetyltransferase (136 aa).

The N-acetyltransferase domain occupies 1-136 (MLSLPRLQTV…ITSHLLVKEL (136 aa)).

Confers resistance to blasticidin S antibiotic. The chain is Blasticidin-S acetyltransferase (bls) from Streptomyces morookaense (Streptoverticillium morookaense).